Here is a 415-residue protein sequence, read N- to C-terminus: Serine hydroxymethyltransferase 1 (415 aa).

(6S)-5,6,7,8-tetrahydrofolate is bound by residues L122 and 126–128; that span reads GHL. At K230 the chain carries N6-(pyridoxal phosphate)lysine.

The protein belongs to the SHMT family. As to quaternary structure, homodimer. The cofactor is pyridoxal 5'-phosphate.

Its subcellular location is the cytoplasm. The catalysed reaction is (6R)-5,10-methylene-5,6,7,8-tetrahydrofolate + glycine + H2O = (6S)-5,6,7,8-tetrahydrofolate + L-serine. It participates in one-carbon metabolism; tetrahydrofolate interconversion. It functions in the pathway amino-acid biosynthesis; glycine biosynthesis; glycine from L-serine: step 1/1. Functionally, catalyzes the reversible interconversion of serine and glycine with tetrahydrofolate (THF) serving as the one-carbon carrier. This reaction serves as the major source of one-carbon groups required for the biosynthesis of purines, thymidylate, methionine, and other important biomolecules. Also exhibits THF-independent aldolase activity toward beta-hydroxyamino acids, producing glycine and aldehydes, via a retro-aldol mechanism. This is Serine hydroxymethyltransferase 1 from Cupriavidus pinatubonensis (strain JMP 134 / LMG 1197) (Cupriavidus necator (strain JMP 134)).